A 238-amino-acid chain; its full sequence is MVQLSKRLKALREQVDRQTIYAPQKALELLKQTANAKFDETAETHIRLGINPKYADQQVRSTVVLPRGTGKAIRIAVLAKGEKVREAEKAGADIAGSEELIERIQGGFMEFDLMIATPDIMPQVARLGKLLGPRGLMPSPKGGTVTMDLVGAIREFKAGKLEFRADRTGIVHIPFGKVSFTPEALMDNLKSVQDAIDRAKPSGAKGRYWRTFHIKSTMGPSIEIDINALRDLKLEGAA.

This sequence belongs to the universal ribosomal protein uL1 family. Part of the 50S ribosomal subunit.

In terms of biological role, binds directly to 23S rRNA. The L1 stalk is quite mobile in the ribosome, and is involved in E site tRNA release. Protein L1 is also a translational repressor protein, it controls the translation of the L11 operon by binding to its mRNA. In Gloeobacter violaceus (strain ATCC 29082 / PCC 7421), this protein is Large ribosomal subunit protein uL1.